The sequence spans 211 residues: N-(5'-phosphoribosyl)anthranilate isomerase (211 aa).

This sequence belongs to the TrpF family.

The catalysed reaction is N-(5-phospho-beta-D-ribosyl)anthranilate = 1-(2-carboxyphenylamino)-1-deoxy-D-ribulose 5-phosphate. It functions in the pathway amino-acid biosynthesis; L-tryptophan biosynthesis; L-tryptophan from chorismate: step 3/5. This Pseudomonas aeruginosa (strain UCBPP-PA14) protein is N-(5'-phosphoribosyl)anthranilate isomerase.